A 54-amino-acid chain; its full sequence is Apelin receptor early endogenous ligand (54 aa).

Residues 1–25 form the signal peptide; the sequence is MRFQPLFWVFFIFAMSLLFITEEKS.

The protein belongs to the Elabela/Toddler family. As to quaternary structure, interacts with APLNR.

Its subcellular location is the secreted. The protein resides in the extracellular space. Peptide hormone that functions as endogenous ligand for the G-protein-coupled apelin receptor (APLNR/APJ), that plays a role in the regulation of normal cardiovascular function and fluid homeostasis. Functions as a balanced agonist activating both G(i) protein pathway and beta-arrestin pathway of APLNR. Downstream G proteins activation, apelin can inhibit cAMP production and activate key intracellular effectors such as ERKs. On the other hand, APLNR activation induces beta-arrestin recruitment to the membrane leading to desensitization and internalization of the receptor. Required for mesendodermal differentiation, blood vessels formation and heart morphogenesis during early development and for adult cardiovascular homeostasis. Acts as a motogen by promoting mesendodermal cell migration during gastrulation by binding and activating APLNR. Acts as an early embryonic regulator of cellular movement with a role in migration and development of cardiac progenitor cells. May act as a chemoattractant for the activation of angioblast migration toward the embryonic midline, i.e. the position of the future vessel formation, during vasculogenesis. Positively regulates sinus venosus (SV)-derived endothelial cells migration into the developing heart to promote coronary blood vessel sprouting. Plays a role in placental vascular development; promotes placental trophoblast invasion and spiral artery remodeling in the uterus. Involved in the regulation of maternal cardiovascular homeostasis to prevent gestational hypertension and for potent cardioprotective functions during heart failure. Mediates myocardial contractility in an ERK1/2-dependent manner. The sequence is that of Apelin receptor early endogenous ligand from Rattus norvegicus (Rat).